The chain runs to 4363 residues: AM-toxin synthetase AMT1 (4363 aa).

The interval 278–670 (AGQAKQRPHA…GSLLYVGRKD (393 aa)) is adenylation 1. One can recognise a Carrier 1 domain in the interval 810 to 887 (APDSVIARQL…ALAAIAKVIP (78 aa)). An O-(pantetheine 4'-phosphoryl)serine modification is found at S847. The interval 926–1340 (EDVYACTPLQ…TLGQIDVLTS (415 aa)) is condensation 1. An adenylation 2 region spans residues 1368 to 1765 (KQARTRPGAI…LGRKDTQIKI (398 aa)). The Carrier 2 domain maps to 1884 to 1961 (PPVTDMEKHV…DQARHVTLLT (78 aa)). At S1922 the chain carries O-(pantetheine 4'-phosphoryl)serine. The segment at 1999–2410 (EDVYPCTPLQ…ASPSSSTLVS (412 aa)) is condensation 2. The adenylation 3 stretch occupies residues 2448-2853 (RKKALAAPQA…GRKDNQVKIR (406 aa)). Positions 2977–3053 (LPSTVMEETL…DLAACCTDRR (77 aa)) constitute a Carrier 3 domain. S3014 bears the O-(pantetheine 4'-phosphoryl)serine mark. The tract at residues 3098-3503 (VEDVYPCTPM…ELVSSIETLN (406 aa)) is condensation 3. Residues 3730–3806 (PAVTAMQLAI…SLAVRATENT (77 aa)) enclose the Carrier 4 domain. At S3767 the chain carries O-(pantetheine 4'-phosphoryl)serine. Residues 3850-4204 (QDVLPCTSMQ…GLDEIVEHYA (355 aa)) form a condensation 4 region.

This sequence belongs to the NRP synthetase family.

The protein operates within mycotoxin biosynthesis. In terms of biological role, nonribosomal peptide synthetase; part of the gene clusters that mediate the biosynthesis of AM-toxins, host-selective toxins (HSTs) causing Alternaria blotch on apple, a worldwide distributed disease. AM-toxins are cyclic depsipeptides containing the 3 residues 2-hydroxy-isovaleric acid (2-HIV), dehydroalanine, L-alanine which are common for all 3 AM-toxins I to III. The fourth precursor is L-alpha-amino-methoxyphenyl-valeric acid (L-Amv) for AM-toxin I, L-alpha-amino-phenyl-valeric acid (L-Apv) for AM-toxin II, and L-alpha-amino-hydroxyphenyl-valeric acid (L-Ahv) for AM-toxin III. AM-toxins have two target sites for affecting susceptible apple cells; they cause invagination of the plasma membrane and electrolyte loss, and chloroplast disorganization. The non-ribosomal peptide synthetase AMT1 contains 4 catalytic modules and is responsible for activation of each residue in AM-toxin. The aldo-keto reductase AMT2 catalyzes the conversion of 2-keto-isovaleric acid (2-KIV) to 2-hydroxy-isovaleric acid (2-HIV), one of the precursor residues incorporated by AMT1 during AM-toxin biosynthesis, by reduction of its ketone to an alcohol. The cytochrome P450 monooxygenase AMT3 and the thioesterase AMT4 are also important for AM-toxin production, but their exact function within the AM-toxin biosynthesis are not known yet. Up to 21 proteins (including AMT1 to AMT4) are predicted to be involved in AM-toxin biosynthesis since their expression ishighly up-regulated in AM-toxin-producing cultures. This chain is AM-toxin synthetase AMT1, found in Alternaria alternata (Alternaria rot fungus).